The following is a 293-amino-acid chain: Shikimate dehydrogenase (NADP(+)) (293 aa).

Shikimate contacts are provided by residues 20 to 22 (SLT) and threonine 72. Lysine 76 serves as the catalytic Proton acceptor. Residues asparagine 97 and aspartate 112 each contribute to the shikimate site. Residues 136-140 (GAGGA) and isoleucine 230 contribute to the NADP(+) site. Residue tyrosine 232 participates in shikimate binding. Residue glycine 253 participates in NADP(+) binding.

It belongs to the shikimate dehydrogenase family. In terms of assembly, homodimer.

The enzyme catalyses shikimate + NADP(+) = 3-dehydroshikimate + NADPH + H(+). It participates in metabolic intermediate biosynthesis; chorismate biosynthesis; chorismate from D-erythrose 4-phosphate and phosphoenolpyruvate: step 4/7. In terms of biological role, involved in the biosynthesis of the chorismate, which leads to the biosynthesis of aromatic amino acids. Catalyzes the reversible NADPH linked reduction of 3-dehydroshikimate (DHSA) to yield shikimate (SA). The polypeptide is Shikimate dehydrogenase (NADP(+)) (Arthrobacter sp. (strain FB24)).